Here is a 455-residue protein sequence, read N- to C-terminus: Probable glycine dehydrogenase (decarboxylating) subunit 1 (455 aa).

Belongs to the GcvP family. N-terminal subunit subfamily. The glycine cleavage system is composed of four proteins: P, T, L and H. In this organism, the P 'protein' is a heterodimer of two subunits.

It catalyses the reaction N(6)-[(R)-lipoyl]-L-lysyl-[glycine-cleavage complex H protein] + glycine + H(+) = N(6)-[(R)-S(8)-aminomethyldihydrolipoyl]-L-lysyl-[glycine-cleavage complex H protein] + CO2. Functionally, the glycine cleavage system catalyzes the degradation of glycine. The P protein binds the alpha-amino group of glycine through its pyridoxal phosphate cofactor; CO(2) is released and the remaining methylamine moiety is then transferred to the lipoamide cofactor of the H protein. The chain is Probable glycine dehydrogenase (decarboxylating) subunit 1 from Saccharolobus islandicus (strain M.16.27) (Sulfolobus islandicus).